Reading from the N-terminus, the 67-residue chain is Large ribosomal subunit protein uL30 (67 aa).

It belongs to the universal ribosomal protein uL30 family. Part of the 50S ribosomal subunit.

The protein is Large ribosomal subunit protein uL30 of Thermotoga maritima (strain ATCC 43589 / DSM 3109 / JCM 10099 / NBRC 100826 / MSB8).